Reading from the N-terminus, the 368-residue chain is Membrane glycoprotein UL18 (368 aa).

Residues 1–19 (MMTMWCLTLFVLWMLRVVG) form the signal peptide. A helical transmembrane segment spans residues 326–346 (ISSVLLALLLCALLFAFLHYF).

Interacts with host LILRB1.

The protein resides in the host membrane. Its function is as follows. Plays a role in the protection against host NK cell cytotoxicity by interacting with and modulating the activity of the host inhibitory leukocyte Ig-like receptor 1/LILRB1, which is expressed on monocytes, dendritic cells, as well as subsets of T and NK cells. UL18 exerts an inhibitory effect on LIR-1+ NK cells, while it stimulates LIR-1- NK cell. The sequence is that of Membrane glycoprotein UL18 (UL18) from Homo sapiens (Human).